We begin with the raw amino-acid sequence, 224 residues long: Ribose-5-phosphate isomerase A (224 aa).

Substrate is bound by residues 34–37, 87–90, and 100–103; these read TGST, DGAD, and KGGG. Residue E109 is the Proton acceptor of the active site. Residue K127 coordinates substrate.

The protein belongs to the ribose 5-phosphate isomerase family. As to quaternary structure, homodimer.

It carries out the reaction aldehydo-D-ribose 5-phosphate = D-ribulose 5-phosphate. The protein operates within carbohydrate degradation; pentose phosphate pathway; D-ribose 5-phosphate from D-ribulose 5-phosphate (non-oxidative stage): step 1/1. Catalyzes the reversible conversion of ribose-5-phosphate to ribulose 5-phosphate. This Francisella tularensis subsp. novicida (strain U112) protein is Ribose-5-phosphate isomerase A.